The chain runs to 149 residues: Large ribosomal subunit protein bL9 (149 aa).

Belongs to the bacterial ribosomal protein bL9 family.

In terms of biological role, binds to the 23S rRNA. This Xanthomonas axonopodis pv. citri (strain 306) protein is Large ribosomal subunit protein bL9.